The chain runs to 148 residues: uncharacterized protein (148 aa).

Basic and acidic residues predominate over residues 97 to 112 (KKLDEQRMPGKPKNTE). Residues 97 to 126 (KKLDEQRMPGKPKNTEGSKSTIRKKANVGN) are disordered.

This is an uncharacterized protein from Caenorhabditis elegans.